The chain runs to 252 residues: 3-dehydroquinate dehydratase (252 aa).

3-dehydroquinate-binding positions include S21, 46–48 (EWR), and R82. H143 serves as the catalytic Proton donor/acceptor. The active-site Schiff-base intermediate with substrate is K170. 3-dehydroquinate is bound by residues R213, S232, and Q236.

This sequence belongs to the type-I 3-dehydroquinase family. Homodimer.

It carries out the reaction 3-dehydroquinate = 3-dehydroshikimate + H2O. It functions in the pathway metabolic intermediate biosynthesis; chorismate biosynthesis; chorismate from D-erythrose 4-phosphate and phosphoenolpyruvate: step 3/7. Involved in the third step of the chorismate pathway, which leads to the biosynthesis of aromatic amino acids. Catalyzes the cis-dehydration of 3-dehydroquinate (DHQ) and introduces the first double bond of the aromatic ring to yield 3-dehydroshikimate. In Escherichia coli O139:H28 (strain E24377A / ETEC), this protein is 3-dehydroquinate dehydratase.